A 233-amino-acid polypeptide reads, in one-letter code: RNA-free ribonuclease P (233 aa).

It belongs to the HARP family.

It carries out the reaction Endonucleolytic cleavage of RNA, removing 5'-extranucleotides from tRNA precursor.. Its function is as follows. RNA-free RNase P that catalyzes the removal of the 5'-leader sequence from pre-tRNA to produce the mature 5'-terminus. The chain is RNA-free ribonuclease P from Methanocaldococcus jannaschii (strain ATCC 43067 / DSM 2661 / JAL-1 / JCM 10045 / NBRC 100440) (Methanococcus jannaschii).